The primary structure comprises 468 residues: ATP synthase subunit beta (468 aa).

148-155 (GGAGVGKT) is a binding site for ATP.

It belongs to the ATPase alpha/beta chains family. In terms of assembly, F-type ATPases have 2 components, CF(1) - the catalytic core - and CF(0) - the membrane proton channel. CF(1) has five subunits: alpha(3), beta(3), gamma(1), delta(1), epsilon(1). CF(0) has three main subunits: a(1), b(2) and c(9-12). The alpha and beta chains form an alternating ring which encloses part of the gamma chain. CF(1) is attached to CF(0) by a central stalk formed by the gamma and epsilon chains, while a peripheral stalk is formed by the delta and b chains.

Its subcellular location is the cell inner membrane. It catalyses the reaction ATP + H2O + 4 H(+)(in) = ADP + phosphate + 5 H(+)(out). Its function is as follows. Produces ATP from ADP in the presence of a proton gradient across the membrane. The catalytic sites are hosted primarily by the beta subunits. The protein is ATP synthase subunit beta of Xanthomonas campestris pv. campestris (strain B100).